The chain runs to 784 residues: PWWP domain-containing protein 2A (784 aa).

The segment covering 1-10 (MAAVAAAPGP) has biased composition (low complexity). 4 disordered regions span residues 1-29 (MAAV…EWRL), 399-443 (DHKV…KTQL), 468-570 (EKAQ…EIQD), and 609-655 (SSAS…SKEE). The span at 399 to 412 (DHKVNGKGQHESQK) shows a compositional bias: basic and acidic residues. Residues 433–442 (PSQTSAAKTQ) show a composition bias toward polar residues. A PWWP domain is found at 684-744 (VGDIVWAKIY…LSQLAPFLEN (61 aa)).

The protein resides in the nucleus. In terms of biological role, H2A.Z-specific chromatin binding protein which plays an important role in the neural crest cell differentiation and/or migration during early development and is essential for the development of the head and eye. Acts as an adapter between distinct nucleosome components (H3K36me3 or H2A.Z) and chromatin-modifying complexes, contributing to the regulation of the levels of histone acetylation at actively transcribed genes. The protein is PWWP domain-containing protein 2A (pwwp2a) of Xenopus laevis (African clawed frog).